The chain runs to 959 residues: Protein NLP7 (959 aa).

Positions 1–22 are disordered; the sequence is MCEPDDNSARNGVTTQPSRSRE. Polar residues predominate over residues 9 to 18; the sequence is ARNGVTTQPS. Positions 578 to 659 constitute an RWP-RK domain; the sequence is KKKTEKKRGK…IESVQGTDGG (82 aa). The stretch at 633-654 forms a coiled coil; it reads SRKIKKVNRSITKLKRVIESVQ. Polar residues-rich tracts occupy residues 673 to 687, 694 to 703, and 735 to 745; these read THGQ…SPNG, PNTNNSPNHW, and GTPTSHGSCDG. The tract at residues 673-760 is disordered; that stretch reads THGQTSAQPL…PKVPNQDPLF (88 aa). Positions 863–945 constitute a PB1 domain; the sequence is TVTIKASYKD…KIVRLLVHDV (83 aa).

In terms of assembly, interacts with NRG2. Expressed in roots, stems, leaves, flowers and siliques. Detected in root hairs, emerging secondary roots, vascular tissues, leaf parenchyma cells and stomata.

It localises to the nucleus. Transcription factor involved in regulation of nitrate assimilation and in transduction of the nitrate signal. The chain is Protein NLP7 (NLP7) from Arabidopsis thaliana (Mouse-ear cress).